The primary structure comprises 386 residues: S-adenosylmethionine synthase (386 aa).

ATP is bound at residue His16. Asp18 contacts Mg(2+). Glu44 contributes to the K(+) binding site. L-methionine-binding residues include Glu57 and Gln100. The interval Gln100–Arg110 is flexible loop. ATP contacts are provided by residues Asp164–Lys166, Lys230–Phe231, Asp239, Arg245–Lys246, Ala262, and Lys266. Residue Asp239 participates in L-methionine binding. Lys270 lines the L-methionine pocket.

It belongs to the AdoMet synthase family. Homotetramer; dimer of dimers. Mg(2+) is required as a cofactor. Requires K(+) as cofactor.

The protein resides in the cytoplasm. It catalyses the reaction L-methionine + ATP + H2O = S-adenosyl-L-methionine + phosphate + diphosphate. Its pathway is amino-acid biosynthesis; S-adenosyl-L-methionine biosynthesis; S-adenosyl-L-methionine from L-methionine: step 1/1. Catalyzes the formation of S-adenosylmethionine (AdoMet) from methionine and ATP. The overall synthetic reaction is composed of two sequential steps, AdoMet formation and the subsequent tripolyphosphate hydrolysis which occurs prior to release of AdoMet from the enzyme. The polypeptide is S-adenosylmethionine synthase (Wolinella succinogenes (strain ATCC 29543 / DSM 1740 / CCUG 13145 / JCM 31913 / LMG 7466 / NCTC 11488 / FDC 602W) (Vibrio succinogenes)).